Reading from the N-terminus, the 512-residue chain is Mesoderm induction early response protein 1 (512 aa).

A compositionally biased stretch (low complexity) spans 1–16 (MAEPSVESSSPGGSAT). Disordered stretches follow at residues 1–63 (MAEP…REGD) and 75–173 (YGST…EDYI). Residue serine 10 is modified to Phosphoserine. Residues 17 to 36 (SDDHEFDPSADMLVHDFDDE) are compositionally biased toward basic and acidic residues. Acidic residues-rich tracts occupy residues 37–46 (RTLEEEEMME) and 83–105 (EEDE…DNDD). Residues 129–144 (QSSNDDPSQSVASQDA) show a composition bias toward polar residues. Serine 141 is subject to Phosphoserine. Tyrosine 155 carries the post-translational modification Phosphotyrosine. Phosphoserine occurs at positions 160 and 166. Over residues 160–173 (SEVEEESEEDEDYI) the composition is skewed to acidic residues. Residues 180–278 (KEIMVGSMFQ…EALRRLRFNV (99 aa)) form the ELM2 domain. An interaction with HDAC1 region spans residues 180 to 284 (KEIMVGSMFQ…RFNVKAAREE (105 aa)). A Glycyl lysine isopeptide (Lys-Gly) (interchain with G-Cter in SUMO2) cross-link involves residue lysine 239. The 53-residue stretch at 283–335 (EELSVWTEEECRNFEQGLKAYGKDFHLIQANKVRTRSVGECVAFYYMWKKSER) folds into the SANT domain. The segment at 366–512 (ESESAASSRA…KFEELENTDD (147 aa)) is disordered. A phosphoserine mark is found at serine 367, serine 369, and serine 377. Over residues 396–409 (TVSTANQNGVSSNG) the composition is skewed to polar residues. Residues 414 to 423 (LNKEEVKVEG) are compositionally biased toward basic and acidic residues. Residue lysine 420 forms a Glycyl lysine isopeptide (Lys-Gly) (interchain with G-Cter in SUMO2) linkage. Threonine 448 carries the phosphothreonine modification. The segment covering 462–475 (ARNENDFDEKSERP) has biased composition (basic and acidic residues). The segment covering 482–494 (NSNGKESPGSSEF) has biased composition (polar residues). Residues serine 483, serine 488, and serine 491 each carry the phosphoserine modification.

As to quaternary structure, interacts with HDAC1. Part of a complex containing at least CDYL, MIER1, MIER2, HDAC1 and HDAC2. As to expression, ubiquitously expressed, but at very low levels. However, consistent level of expression are observed in heart, testis, thyroid, ovary and adrenal gland. Transcripts are up-regulated in breast carcinoma cell lines and tumor.

It is found in the nucleus. The protein localises to the cytoplasm. Functionally, transcriptional repressor regulating the expression of a number of genes including SP1 target genes. Probably functions through recruitment of HDAC1 a histone deacetylase involved in chromatin silencing. The chain is Mesoderm induction early response protein 1 (MIER1) from Homo sapiens (Human).